The primary structure comprises 227 residues: Phosphoribosylformylglycinamidine synthase subunit PurQ (227 aa).

The Glutamine amidotransferase type-1 domain occupies 3-225; that stretch reads FAVIVFPGSN…LKQWRETYVV (223 aa). The active-site Nucleophile is cysteine 86. Residues histidine 194 and glutamate 196 contribute to the active site.

As to quaternary structure, part of the FGAM synthase complex composed of 1 PurL, 1 PurQ and 2 PurS subunits.

It is found in the cytoplasm. The catalysed reaction is N(2)-formyl-N(1)-(5-phospho-beta-D-ribosyl)glycinamide + L-glutamine + ATP + H2O = 2-formamido-N(1)-(5-O-phospho-beta-D-ribosyl)acetamidine + L-glutamate + ADP + phosphate + H(+). It catalyses the reaction L-glutamine + H2O = L-glutamate + NH4(+). It functions in the pathway purine metabolism; IMP biosynthesis via de novo pathway; 5-amino-1-(5-phospho-D-ribosyl)imidazole from N(2)-formyl-N(1)-(5-phospho-D-ribosyl)glycinamide: step 1/2. In terms of biological role, part of the phosphoribosylformylglycinamidine synthase complex involved in the purines biosynthetic pathway. Catalyzes the ATP-dependent conversion of formylglycinamide ribonucleotide (FGAR) and glutamine to yield formylglycinamidine ribonucleotide (FGAM) and glutamate. The FGAM synthase complex is composed of three subunits. PurQ produces an ammonia molecule by converting glutamine to glutamate. PurL transfers the ammonia molecule to FGAR to form FGAM in an ATP-dependent manner. PurS interacts with PurQ and PurL and is thought to assist in the transfer of the ammonia molecule from PurQ to PurL. The polypeptide is Phosphoribosylformylglycinamidine synthase subunit PurQ (Bacillus thuringiensis (strain Al Hakam)).